The sequence spans 255 residues: Hydroxyacylglutathione hydrolase (255 aa).

His-56, His-58, Asp-60, His-61, His-114, Asp-133, and His-171 together coordinate Zn(2+).

Belongs to the metallo-beta-lactamase superfamily. Glyoxalase II family. Monomer. Requires Zn(2+) as cofactor.

The catalysed reaction is an S-(2-hydroxyacyl)glutathione + H2O = a 2-hydroxy carboxylate + glutathione + H(+). Its pathway is secondary metabolite metabolism; methylglyoxal degradation; (R)-lactate from methylglyoxal: step 2/2. In terms of biological role, thiolesterase that catalyzes the hydrolysis of S-D-lactoyl-glutathione to form glutathione and D-lactic acid. The chain is Hydroxyacylglutathione hydrolase from Bradyrhizobium sp. (strain ORS 278).